The chain runs to 327 residues: GMP reductase (327 aa).

Cys-175 functions as the Thioimidate intermediate in the catalytic mechanism. 204–227 contacts NADP(+); it reads IIADGGIRTPGDIAKSIRFGATMV.

Belongs to the IMPDH/GMPR family. GuaC type 2 subfamily.

It carries out the reaction IMP + NH4(+) + NADP(+) = GMP + NADPH + 2 H(+). In terms of biological role, catalyzes the irreversible NADPH-dependent deamination of GMP to IMP. It functions in the conversion of nucleobase, nucleoside and nucleotide derivatives of G to A nucleotides, and in maintaining the intracellular balance of A and G nucleotides. The protein is GMP reductase of Clostridium acetobutylicum (strain ATCC 824 / DSM 792 / JCM 1419 / IAM 19013 / LMG 5710 / NBRC 13948 / NRRL B-527 / VKM B-1787 / 2291 / W).